The chain runs to 67 residues: Alpha-actitoxin-Ms11a-3 (67 aa).

Residues 1–24 (MASKIFFVLAVFLVMSAVLPESFA) form the signal peptide. Cystine bridges form between cysteine 26/cysteine 41, cysteine 33/cysteine 46, and cysteine 40/cysteine 61. Position 66 is a lysine amide (lysine 66).

The protein resides in the secreted. Its subcellular location is the nematocyst. In terms of biological role, alpha-toxins act on postsynaptic membranes, they bind to the nicotinic acetylcholine receptors (nAChR) and thus inhibit them. This toxin shows inhibition against mouse alpha-1-beta-1-delta-epsilon (CHRNA1-CHRNB1-CHRND-CHRNE) (IC(50)=1215 nM), rat alpha-3-beta-4/CHRNA3-CHRNB4 (IC(50)=5.173 uM), rat alpha-7/CHRNA7 (IC(50)=4.786 uM), human alpha-7/CHRNA7 (IC(50)=8.869 uM), and rat alpha-9-alpha-10/CHRNA9-CHRNA10 (IC(50)=202 nM). Also competes with alpha-bungarotoxin for binding to orthosteric sites on muscle-type T.carlifornicus (IC(50)=256 nM) and human alpha-7/CHRNA7 nAChRs (IC(50)=19.81 uM). This Metridium senile (Brown sea anemone) protein is Alpha-actitoxin-Ms11a-3.